Reading from the N-terminus, the 241-residue chain is Endodeoxyribonuclease NucC (241 aa).

Residues aspartate 73, glutamate 104, and lysine 106 contribute to the active site. Mg(2+) contacts are provided by aspartate 73 and glutamate 104.

It belongs to the NucC endonuclease family. In terms of assembly, self-oligomerizes. Forms homotrimers; in the presence of cAAA the trimers associate face-to-face to form homohexamers. The 2 cAAA-binding sites are on the exterior of the hexamer at the three-way junction, there are maximally 2 cyclic nucleotides per hexamer. The cofactor is Mg(2+).

Activated by cAAA and to a lesser extent cAA; both cyclic nucleotides are products of its cognate CD-NTase. Cyclic nucleotide binding causes hexamerization. Functionally, effector DNase of a CBASS antivirus system. CBASS (cyclic oligonucleotide-based antiphage signaling system) provides immunity against bacteriophage. The CD-NTase protein synthesizes cyclic nucleotides in response to infection; these serve as specific second messenger signals. The signals activate a diverse range of effectors, leading to bacterial cell death and thus abortive phage infection. A type III-C(AAA) CBASS system. In terms of biological role, a cyclic nucleotide-activated dsDNase. In the presence of 3',3',3'-cyclic AMP-AMP-AMP (cAAA) and to a lesser extent cyclic-di-AMP (c-di-AMP), endonucleolytically degrades dsDNA. Binds one cAAA in a pocket on one surface of the trimer; cAAA binding promotes hexamerization which is probably necessary for nuclease activation. The nuclease digests dsDNA to about 50 bp lengths. DNA has been modeled to contact a pair of juxtaposed active sites (one from each layer of the hexamer), accounting for cleavage on both strands. In Pseudomonas aeruginosa, this protein is Endodeoxyribonuclease NucC.